The primary structure comprises 283 residues: Pyridoxine/pyridoxal/pyridoxamine kinase (283 aa).

Residues S23 and H59 each coordinate substrate. D125 serves as a coordination point for ATP. A Mg(2+)-binding site is contributed by Y136. ATP contacts are provided by residues T157, E162, T195, 222–225 (HAHV), and T232. Position 162 (E162) interacts with Mg(2+). Residue D234 coordinates substrate.

Belongs to the pyridoxine kinase family. PdxK subfamily. Homodimer. Requires Mg(2+) as cofactor.

The enzyme catalyses pyridoxal + ATP = pyridoxal 5'-phosphate + ADP + H(+). It carries out the reaction pyridoxine + ATP = pyridoxine 5'-phosphate + ADP + H(+). The catalysed reaction is pyridoxamine + ATP = pyridoxamine 5'-phosphate + ADP + H(+). The protein operates within cofactor metabolism; pyridoxal 5'-phosphate salvage; pyridoxal 5'-phosphate from pyridoxal: step 1/1. It functions in the pathway cofactor metabolism; pyridoxal 5'-phosphate salvage; pyridoxine 5'-phosphate from pyridoxine: step 1/1. Its pathway is cofactor metabolism; pyridoxal 5'-phosphate salvage; pyridoxamine 5'-phosphate from pyridoxamine: step 1/1. In terms of biological role, B6-vitamer kinase involved in the salvage pathway of pyridoxal 5'-phosphate (PLP). Catalyzes the phosphorylation of pyridoxine (PN), pyridoxal (PL), and pyridoxamine (PM), forming their respective 5'-phosphorylated esters, i.e. PNP, PLP and PMP. In Bordetella bronchiseptica (strain ATCC BAA-588 / NCTC 13252 / RB50) (Alcaligenes bronchisepticus), this protein is Pyridoxine/pyridoxal/pyridoxamine kinase.